Reading from the N-terminus, the 158-residue chain is NADH-quinone oxidoreductase subunit B (158 aa).

Residues Cys37, Cys38, Cys102, and Cys132 each coordinate [4Fe-4S] cluster.

Belongs to the complex I 20 kDa subunit family. In terms of assembly, NDH-1 is composed of 14 different subunits. Subunits NuoB, C, D, E, F, and G constitute the peripheral sector of the complex. Requires [4Fe-4S] cluster as cofactor.

It localises to the cell inner membrane. It catalyses the reaction a quinone + NADH + 5 H(+)(in) = a quinol + NAD(+) + 4 H(+)(out). Functionally, NDH-1 shuttles electrons from NADH, via FMN and iron-sulfur (Fe-S) centers, to quinones in the respiratory chain. Couples the redox reaction to proton translocation (for every two electrons transferred, four hydrogen ions are translocated across the cytoplasmic membrane), and thus conserves the redox energy in a proton gradient. This chain is NADH-quinone oxidoreductase subunit B, found in Hydrogenovibrio crunogenus (strain DSM 25203 / XCL-2) (Thiomicrospira crunogena).